We begin with the raw amino-acid sequence, 307 residues long: Aspartate carbamoyltransferase catalytic subunit (307 aa).

Carbamoyl phosphate contacts are provided by R58 and T59. K86 contacts L-aspartate. Carbamoyl phosphate is bound by residues R108, H136, and Q139. L-aspartate-binding residues include R169 and R223. Positions 264 and 265 each coordinate carbamoyl phosphate.

This sequence belongs to the aspartate/ornithine carbamoyltransferase superfamily. ATCase family. Heterododecamer (2C3:3R2) of six catalytic PyrB chains organized as two trimers (C3), and six regulatory PyrI chains organized as three dimers (R2).

The catalysed reaction is carbamoyl phosphate + L-aspartate = N-carbamoyl-L-aspartate + phosphate + H(+). The protein operates within pyrimidine metabolism; UMP biosynthesis via de novo pathway; (S)-dihydroorotate from bicarbonate: step 2/3. Catalyzes the condensation of carbamoyl phosphate and aspartate to form carbamoyl aspartate and inorganic phosphate, the committed step in the de novo pyrimidine nucleotide biosynthesis pathway. The sequence is that of Aspartate carbamoyltransferase catalytic subunit from Moorella thermoacetica (strain ATCC 39073 / JCM 9320).